Reading from the N-terminus, the 320-residue chain is Aspartate carbamoyltransferase catalytic subunit (320 aa).

Carbamoyl phosphate-binding residues include Arg-68 and Thr-69. An L-aspartate-binding site is contributed by Lys-96. Residues Arg-118, His-148, and Gln-151 each contribute to the carbamoyl phosphate site. L-aspartate is bound by residues Arg-181 and Arg-236. Carbamoyl phosphate-binding residues include Gly-277 and Pro-278.

This sequence belongs to the aspartate/ornithine carbamoyltransferase superfamily. ATCase family. As to quaternary structure, heterododecamer (2C3:3R2) of six catalytic PyrB chains organized as two trimers (C3), and six regulatory PyrI chains organized as three dimers (R2).

The enzyme catalyses carbamoyl phosphate + L-aspartate = N-carbamoyl-L-aspartate + phosphate + H(+). Its pathway is pyrimidine metabolism; UMP biosynthesis via de novo pathway; (S)-dihydroorotate from bicarbonate: step 2/3. In terms of biological role, catalyzes the condensation of carbamoyl phosphate and aspartate to form carbamoyl aspartate and inorganic phosphate, the committed step in the de novo pyrimidine nucleotide biosynthesis pathway. This is Aspartate carbamoyltransferase catalytic subunit from Delftia acidovorans (strain DSM 14801 / SPH-1).